Reading from the N-terminus, the 388-residue chain is 4-hydroxy-3-methylbut-2-en-1-yl diphosphate synthase (flavodoxin) (388 aa).

Positions 281, 284, 316, and 323 each coordinate [4Fe-4S] cluster.

The protein belongs to the IspG family. Requires [4Fe-4S] cluster as cofactor.

It carries out the reaction (2E)-4-hydroxy-3-methylbut-2-enyl diphosphate + oxidized [flavodoxin] + H2O + 2 H(+) = 2-C-methyl-D-erythritol 2,4-cyclic diphosphate + reduced [flavodoxin]. Its pathway is isoprenoid biosynthesis; isopentenyl diphosphate biosynthesis via DXP pathway; isopentenyl diphosphate from 1-deoxy-D-xylulose 5-phosphate: step 5/6. Functionally, converts 2C-methyl-D-erythritol 2,4-cyclodiphosphate (ME-2,4cPP) into 1-hydroxy-2-methyl-2-(E)-butenyl 4-diphosphate. This Pseudarthrobacter chlorophenolicus (strain ATCC 700700 / DSM 12829 / CIP 107037 / JCM 12360 / KCTC 9906 / NCIMB 13794 / A6) (Arthrobacter chlorophenolicus) protein is 4-hydroxy-3-methylbut-2-en-1-yl diphosphate synthase (flavodoxin).